The following is a 734-amino-acid chain: Homoaconitase, mitochondrial (734 aa).

The N-terminal 25 residues, 1–25 (MGASNLLRFGAVTRISTPLLSRRSL), are a transit peptide targeting the mitochondrion. Residues Cys367, Cys427, and Cys430 each contribute to the [4Fe-4S] cluster site.

The protein belongs to the aconitase/IPM isomerase family. [4Fe-4S] cluster is required as a cofactor.

It is found in the mitochondrion. It carries out the reaction (2R,3S)-homoisocitrate = cis-homoaconitate + H2O. It functions in the pathway amino-acid biosynthesis; L-lysine biosynthesis via AAA pathway; L-alpha-aminoadipate from 2-oxoglutarate: step 3/5. Catalyzes the reversible hydration of cis-homoaconitate to (2R,3S)-homoisocitrate, a step in the alpha-aminoadipate pathway for lysine biosynthesis. In Mycosarcoma maydis (Corn smut fungus), this protein is Homoaconitase, mitochondrial (LYS4).